We begin with the raw amino-acid sequence, 2800 residues long: Probable serine/threonine-protein kinase roco5 (2800 aa).

The segment covering 1–61 (MEVIKKEKKD…EKEKDKEKDG (61 aa)) has biased composition (basic and acidic residues). Disordered regions lie at residues 1-92 (MEVI…SAQS), 123-225 (TTTT…SPVD), and 417-437 (GINS…SSGI). The span at 77–86 (PTPPPPPPPS) shows a compositional bias: pro residues. Composition is skewed to low complexity over residues 123–134 (TTTTTTTTSSNN) and 143–170 (NNNT…SSNN). The segment covering 176-190 (INVTSLDSGGNNNAS) has biased composition (polar residues). The segment covering 194–218 (ISNEHSPKNRKEKEKEKDKDNKEDS) has biased composition (basic and acidic residues). One can recognise a DH domain in the interval 227–508 (NRRKLVEGFM…VQVVKDIVNE (282 aa)). A compositionally biased stretch (low complexity) spans 417–429 (GINSANSNNNNNN). One can recognise a PH domain in the interval 540 to 649 (KFLKEGILIE…WFQVLSQASL (110 aa)). 4 LRR repeats span residues 777 to 800 (NKSI…ALGD), 805 to 832 (NHSL…GILS), 834 to 856 (PSIT…HISK), and 861 to 885 (NQTL…IIDQ). The tract at residues 926–946 (KQLQVNQKSTTPSTSTSTTSS) is disordered. Positions 934-946 (STTPSTSTSTTSS) are enriched in low complexity. LRR repeat units follow at residues 971-984 (LNKL…SRRI), 985-1007 (SDLK…ILKE), 1008-1031 (LKNL…ISEM), 1033-1056 (ELKL…TLCK), 1058-1077 (NHLD…SLSQ), 1078-1101 (LVNL…IFTR), 1128-1151 (AIKA…IGSI), 1152-1174 (SSLI…IGKL), 1175-1197 (SSLQ…LSQL), and 1199-1222 (TLKV…KISI). A Roc domain is found at 1244-1464 (KEKPCMRMKL…NHIVKLGKAE (221 aa)). GTP-binding positions include 1257–1264 (GQENVGKT), 1348–1352 (DFAGQ), and 1407–1410 (THLD). The region spanning 1473 to 1604 (RSYFQLENLI…KFEIVHPLPD (132 aa)) is the COR 1 domain. Disordered regions lie at residues 1605–1665 (PKAT…SLLN) and 1688–1711 (DQST…FSDS). Composition is skewed to low complexity over residues 1610–1645 (SSSS…SSTT), 1653–1665 (RTNS…SLLN), and 1688–1707 (DQST…SSNN). The COR 2 domain maps to 1717-1790 (KSSTKHLVPI…VKEFWKNGLL (74 aa)). Residues 1886–2008 (SQQQHHQQQQ…LNPDSTSSSN (123 aa)) show a composition bias toward low complexity. 2 disordered regions span residues 1886–2011 (SQQQ…NETS) and 2050–2070 (RNTN…SSIV). Over residues 2050–2059 (RNTNKPKING) the composition is skewed to polar residues. A Protein kinase domain is found at 2175–2440 (LEIIEKVGEG…PTFIDIHSRL (266 aa)). Residues 2181 to 2189 (VGEGGFGIV) and Lys-2202 contribute to the ATP site. Residue Asp-2300 is the Proton acceptor of the active site. 4 stretches are compositionally biased toward low complexity: residues 2452-2490 (TTTN…GTTS), 2583-2654 (LKTP…SPIS), 2669-2685 (TTQT…PNPT), and 2694-2704 (SSLSSNSINKP). 2 disordered regions span residues 2452–2498 (TTTN…HPQL) and 2544–2800 (AGGN…AIPK). The span at 2705 to 2723 (PSKPLPTPGGVTSPPPPPT) shows a compositional bias: pro residues. Over residues 2730 to 2756 (IKFNSISAGNKTIGQSSTLPSSTLKQF) the composition is skewed to polar residues. Residues 2757-2787 (TANNNTSPSGSSSLPNSTVSSPSSSFLLRPT) are compositionally biased toward low complexity.

This sequence belongs to the protein kinase superfamily. TKL Ser/Thr protein kinase family. ROCO subfamily.

The enzyme catalyses L-seryl-[protein] + ATP = O-phospho-L-seryl-[protein] + ADP + H(+). The catalysed reaction is L-threonyl-[protein] + ATP = O-phospho-L-threonyl-[protein] + ADP + H(+). Functionally, may act as a serine/threonine-protein kinase and guanine-nucleotide releasing factor. The chain is Probable serine/threonine-protein kinase roco5 (roco5) from Dictyostelium discoideum (Social amoeba).